Reading from the N-terminus, the 291-residue chain is Beta-lactamase Toho-1 (291 aa).

Residues 1–29 (MMTQSIRRSMLTVMATLPLLFSSATLHAQ) form the signal peptide. The active-site Acyl-ester intermediate is the S73. 237–239 (KTG) contacts substrate.

This sequence belongs to the class-A beta-lactamase family. Monomer.

It catalyses the reaction a beta-lactam + H2O = a substituted beta-amino acid. Its function is as follows. Has strong cefotaxime-hydrolyzing activity. The protein is Beta-lactamase Toho-1 (bla) of Escherichia coli.